Consider the following 177-residue polypeptide: MTPQLIEILSADEIRRTITRLASEVIEKSGDLNNLILIGIYTRGVPLANLIASQIESLEGVKVPVGAIDITFYRDDLDRIKTRTPAKTKMPLDVTGKTVILVDDVIYKGRTIRAAFNAIIEYGRPQKIRLLVLVDRGHRELPIHPDFTGKKLPTAAEEQVKVYLQEIDGKDGVELIK.

Positions 99–111 (VILVDDVIYKGRT) match the PRPP-binding motif.

Belongs to the purine/pyrimidine phosphoribosyltransferase family. PyrR subfamily.

It carries out the reaction UMP + diphosphate = 5-phospho-alpha-D-ribose 1-diphosphate + uracil. Regulates the transcription of the pyrimidine nucleotide (pyr) operon in response to exogenous pyrimidines. Its function is as follows. Also displays a weak uracil phosphoribosyltransferase activity which is not physiologically significant. In Microcystis aeruginosa (strain NIES-843 / IAM M-2473), this protein is Bifunctional protein PyrR.